The primary structure comprises 296 residues: Ribosomal RNA small subunit methyltransferase A (296 aa).

Positions 30, 32, 57, 78, 103, and 128 each coordinate S-adenosyl-L-methionine.

The protein belongs to the class I-like SAM-binding methyltransferase superfamily. rRNA adenine N(6)-methyltransferase family. RsmA subfamily.

Its subcellular location is the cytoplasm. It catalyses the reaction adenosine(1518)/adenosine(1519) in 16S rRNA + 4 S-adenosyl-L-methionine = N(6)-dimethyladenosine(1518)/N(6)-dimethyladenosine(1519) in 16S rRNA + 4 S-adenosyl-L-homocysteine + 4 H(+). In terms of biological role, specifically dimethylates two adjacent adenosines (A1518 and A1519) in the loop of a conserved hairpin near the 3'-end of 16S rRNA in the 30S particle. May play a critical role in biogenesis of 30S subunits. The sequence is that of Ribosomal RNA small subunit methyltransferase A from Staphylococcus epidermidis (strain ATCC 35984 / DSM 28319 / BCRC 17069 / CCUG 31568 / BM 3577 / RP62A).